Reading from the N-terminus, the 239-residue chain is Probable transcriptional regulatory protein Aave_3203 (239 aa).

The disordered stretch occupies residues 1–20; the sequence is MAGHSKWANIQHRKGRQDEK.

Belongs to the TACO1 family.

It is found in the cytoplasm. The protein is Probable transcriptional regulatory protein Aave_3203 of Paracidovorax citrulli (strain AAC00-1) (Acidovorax citrulli).